Consider the following 415-residue polypeptide: Gamma-glutamyl phosphate reductase (415 aa).

Belongs to the gamma-glutamyl phosphate reductase family.

It localises to the cytoplasm. It catalyses the reaction L-glutamate 5-semialdehyde + phosphate + NADP(+) = L-glutamyl 5-phosphate + NADPH + H(+). It participates in amino-acid biosynthesis; L-proline biosynthesis; L-glutamate 5-semialdehyde from L-glutamate: step 2/2. In terms of biological role, catalyzes the NADPH-dependent reduction of L-glutamate 5-phosphate into L-glutamate 5-semialdehyde and phosphate. The product spontaneously undergoes cyclization to form 1-pyrroline-5-carboxylate. This chain is Gamma-glutamyl phosphate reductase, found in Xylella fastidiosa (strain 9a5c).